The chain runs to 550 residues: MADKLFINALKKKFEESPEEKKTTFYTLGGWKQSERKTEFVNAGKEVAAKRGIPQYNPDIGTPLGQRVLMPYQVSTTDTFVEGDDLHFVNNAAMQQMWDDIRRTVIVGLNHAHAVIEKRLGKEVTPETITHYLETVNHAMPGAAVVQEHMVETHPALVADSYVKVFTGNDEIADEIDPAFVIDINKQFPEDQAETLKAEVGDGIWQVVRIPTIVSRTCDGATTSRWSAMQIGMSMISAYKQAAGEAATGDFAYAAKHAEVIHMGTYLPVRRARGENEPGGVPFGYLADICQSSRVNYEDPVRVSLDVVATGAMLYDQIWLGSYMSGGVGFTQYATAAYTDNILDDFTYFGKEYVEDKYGLCEAPNTMDTVLDVASEVTFYGLEQYEEYPALLEDQFGGSQRAAVVAAAAGCSTAFATANAQTGLSGWYLSMYLHKEQHSRLGFYGYDLQDQCGASNVFSIRGDEGLPLELRGPNYPNYAMNVGHQGEYAGISQAPHAARGDAFVFNPLVKIAFADDNLVFDFTNVRGEFAKGALREFEPAGERALITPAK.

Residue Q147 participates in coenzyme F430 binding. Coenzyme B is bound by residues R225, 256–257 (KH), and R270. H257 bears the Pros-methylhistidine mark. At R271 the chain carries 5-methylarginine. A coenzyme M-binding site is contributed by Y333. Q400 bears the 2-methylglutamine mark. Y444 provides a ligand contact to coenzyme M. A 1-thioglycine modification is found at G445. The residue at position 450 (D450) is a (Z)-2,3-didehydroaspartate. C452 carries the S-methylcysteine modification.

The protein belongs to the methyl-coenzyme M reductase alpha subunit family. In terms of assembly, MCR is a hexamer of two alpha, two beta, and two gamma chains, forming a dimer of heterotrimers. Coenzyme F430 serves as cofactor. The alpha subunit contains six modified amino acids near the active site region. Is methylated on His-257, Arg-271, Gln-400 and Cys-452, probably by the action of specific S-adenosylmethionine-dependent methyltransferases. Also contains a thioglycine at position 445, forming a thiopeptide bond. Contains a didehydroaspartate residue at position 450. The methylation on C5 of Arg-271 is a post-translational methylation not essential in vivo, but which plays a role for the stability and structural integrity of MCR.

The protein localises to the cytoplasm. It catalyses the reaction coenzyme B + methyl-coenzyme M = methane + coenzyme M-coenzyme B heterodisulfide. The protein operates within one-carbon metabolism; methyl-coenzyme M reduction; methane from methyl-coenzyme M: step 1/1. Component of the methyl-coenzyme M reductase (MCR) I that catalyzes the reductive cleavage of methyl-coenzyme M (CoM-S-CH3 or 2-(methylthio)ethanesulfonate) using coenzyme B (CoB or 7-mercaptoheptanoylthreonine phosphate) as reductant which results in the production of methane and the mixed heterodisulfide of CoB and CoM (CoM-S-S-CoB). This is the final step in methanogenesis. The protein is Methyl-coenzyme M reductase subunit alpha (mcrA) of Methanothermobacter thermautotrophicus (strain ATCC 29096 / DSM 1053 / JCM 10044 / NBRC 100330 / Delta H) (Methanobacterium thermoautotrophicum).